Here is a 302-residue protein sequence, read N- to C-terminus: Quinolinate synthase (302 aa).

Iminosuccinate is bound by residues H25 and S42. [4Fe-4S] cluster is bound at residue C87. Iminosuccinate is bound by residues 113-115 (YVN) and S130. Position 172 (C172) interacts with [4Fe-4S] cluster. Residues 198 to 200 (HPE) and T215 each bind iminosuccinate. Residue C260 coordinates [4Fe-4S] cluster.

The protein belongs to the quinolinate synthase family. Type 2 subfamily. It depends on [4Fe-4S] cluster as a cofactor.

Its subcellular location is the cytoplasm. The enzyme catalyses iminosuccinate + dihydroxyacetone phosphate = quinolinate + phosphate + 2 H2O + H(+). It functions in the pathway cofactor biosynthesis; NAD(+) biosynthesis; quinolinate from iminoaspartate: step 1/1. Its function is as follows. Catalyzes the condensation of iminoaspartate with dihydroxyacetone phosphate to form quinolinate. The protein is Quinolinate synthase of Methanoregula boonei (strain DSM 21154 / JCM 14090 / 6A8).